The sequence spans 81 residues: Sulfur carrier protein TusA (81 aa).

Cys-20 (cysteine persulfide intermediate) is an active-site residue.

It belongs to the sulfur carrier protein TusA family.

It localises to the cytoplasm. Functionally, sulfur carrier protein which probably makes part of a sulfur-relay system. The polypeptide is Sulfur carrier protein TusA (Colwellia psychrerythraea (strain 34H / ATCC BAA-681) (Vibrio psychroerythus)).